The primary structure comprises 331 residues: HTH-type transcriptional regulator GntR (331 aa).

The HTH lacI-type domain occupies 6–60 (PVLQDVADRVGVTKMTVSRFLRNPEQVSVALRGKIAAALDELGYIPNRAPDILSN). The H-T-H motif DNA-binding region spans 8 to 27 (LQDVADRVGVTKMTVSRFLR).

Its pathway is carbohydrate acid metabolism; D-gluconate degradation [regulation]. Its function is as follows. Negative regulator for the gluconate utilization system GNT-I, the gntUKR operon. The chain is HTH-type transcriptional regulator GntR (gntR) from Escherichia coli O6:H1 (strain CFT073 / ATCC 700928 / UPEC).